We begin with the raw amino-acid sequence, 542 residues long: ATP synthase subunit beta (542 aa).

Positions 1–50 are enriched in low complexity; sequence MAKTPAKAPAAAAKPAAVKKPAAPKAAAAPKAAAVATPAAKKPAAPKAAP. The interval 1-61 is disordered; the sequence is MAKTPAKAPA…SKVAGTREKP (61 aa). 216-223 provides a ligand contact to ATP; that stretch reads GGAGVGKT.

It belongs to the ATPase alpha/beta chains family. As to quaternary structure, F-type ATPases have 2 components, CF(1) - the catalytic core - and CF(0) - the membrane proton channel. CF(1) has five subunits: alpha(3), beta(3), gamma(1), delta(1), epsilon(1). CF(0) has three main subunits: a(1), b(2) and c(9-12). The alpha and beta chains form an alternating ring which encloses part of the gamma chain. CF(1) is attached to CF(0) by a central stalk formed by the gamma and epsilon chains, while a peripheral stalk is formed by the delta and b chains.

It is found in the cell inner membrane. It catalyses the reaction ATP + H2O + 4 H(+)(in) = ADP + phosphate + 5 H(+)(out). In terms of biological role, produces ATP from ADP in the presence of a proton gradient across the membrane. The catalytic sites are hosted primarily by the beta subunits. The polypeptide is ATP synthase subunit beta (Caulobacter sp. (strain K31)).